Consider the following 145-residue polypeptide: Transthyretin (145 aa).

The first 20 residues, 1–20 (MASHRLFLLCLAGLVFMSEA), serve as a signal peptide directing secretion. At C28 the chain carries Sulfocysteine. Position 33 (K33) interacts with L-thyroxine. A 4-carboxyglutamate modification is found at E60. Position 70 is a phosphoserine (S70). E72 contributes to the L-thyroxine binding site. An N-linked (GlcNAc...) asparagine glycan is attached at N116. Residue S135 participates in L-thyroxine binding.

Belongs to the transthyretin family. As to quaternary structure, homotetramer. Dimer of dimers. In the homotetramer, subunits assemble around a central channel that can accommodate two ligand molecules. Interacts with RBP4. Sulfonation of the reactive cysteine Cys-28 enhances the stability of the native conformation of TTR, avoiding misassembly of the protein leading to amyloid formation.

Its subcellular location is the secreted. In terms of biological role, thyroid hormone-binding protein. Probably transports thyroxine from the bloodstream to the brain. This Erinaceus europaeus (Western European hedgehog) protein is Transthyretin (TTR).